We begin with the raw amino-acid sequence, 235 residues long: Small ribosomal subunit protein uS2 (235 aa).

Belongs to the universal ribosomal protein uS2 family.

The protein is Small ribosomal subunit protein uS2 of Synechococcus sp. (strain RCC307).